Here is a 361-residue protein sequence, read N- to C-terminus: RLA class I histocompatibility antigen, alpha chain 11/11 (361 aa).

Residues 1–24 form the signal peptide; it reads MGSMAPRTLLLLLAGALTLKDTQA. Residues 25–114 form an alpha-1 region; it reads GSHSMRYFYT…ALRYYNQSAA (90 aa). Over 25 to 308 the chain is Extracellular; the sequence is GSHSMRYFYT…EPPAQPTALI (284 aa). Asn-110 carries N-linked (GlcNAc...) asparagine glycosylation. Residues 115–206 form an alpha-2 region; that stretch reads GSHTFQTMFG…EMGKETLQRA (92 aa). 2 disulfide bridges follow: Cys-125-Cys-188 and Cys-227-Cys-283. The tract at residues 207–298 is alpha-3; it reads DPPKAHVTHH…GLPEPLTLTW (92 aa). Positions 209–297 constitute an Ig-like C1-type domain; the sequence is PKAHVTHHPA…EGLPEPLTLT (89 aa). The interval 299–308 is connecting peptide; that stretch reads EPPAQPTALI. Residues 309–329 form a helical membrane-spanning segment; that stretch reads VGIVAGVLGVLLILGAVVAVV. Residues 330–361 lie on the Cytoplasmic side of the membrane; the sequence is RRKKHSSDGKGGRYTPAAGGHRDQGSDDSLMP. The disordered stretch occupies residues 335 to 361; sequence SSDGKGGRYTPAAGGHRDQGSDDSLMP. Ser-355 and Ser-358 each carry phosphoserine.

It belongs to the MHC class I family. As to quaternary structure, heterodimer of an alpha chain and a beta chain (beta-2-microglobulin).

It is found in the membrane. In terms of biological role, involved in the presentation of foreign antigens to the immune system. In Oryctolagus cuniculus (Rabbit), this protein is RLA class I histocompatibility antigen, alpha chain 11/11.